A 143-amino-acid chain; its full sequence is Large ribosomal subunit protein uL15 (143 aa).

Composition is skewed to basic residues over residues 1–13 and 23–38; these read MIRK…KMRG and KKHR…GNAG. The disordered stretch occupies residues 1–38; that stretch reads MIRKSKKITKMRGSRTCGYGEAKKHRGAGHRGGRGNAG.

The protein belongs to the universal ribosomal protein uL15 family. As to quaternary structure, part of the 50S ribosomal subunit.

Functionally, binds to the 23S rRNA. This is Large ribosomal subunit protein uL15 from Methanococcus maripaludis (strain C7 / ATCC BAA-1331).